The primary structure comprises 227 residues: ATP synthase F(0) complex subunit a (227 aa).

Helical transmembrane passes span 12–32, 69–89, 98–118, 132–152, 180–200, and 202–222; these read PTYL…ILFP, WAVL…LGLL, QLSL…IIGM, EGTP…SLFI, FVLM…LFLL, and LLEI…LSLY.

The protein belongs to the ATPase A chain family. As to quaternary structure, component of the ATP synthase complex composed at least of ATP5F1A/subunit alpha, ATP5F1B/subunit beta, ATP5MC1/subunit c (homooctomer), MT-ATP6/subunit a, MT-ATP8/subunit 8, ATP5ME/subunit e, ATP5MF/subunit f, ATP5MG/subunit g, ATP5MK/subunit k, ATP5MJ/subunit j, ATP5F1C/subunit gamma, ATP5F1D/subunit delta, ATP5F1E/subunit epsilon, ATP5PF/subunit F6, ATP5PB/subunit b, ATP5PD/subunit d, ATP5PO/subunit OSCP. ATP synthase complex consists of a soluble F(1) head domain (subunits alpha(3) and beta(3)) - the catalytic core - and a membrane F(0) domain - the membrane proton channel (subunits c, a, 8, e, f, g, k and j). These two domains are linked by a central stalk (subunits gamma, delta, and epsilon) rotating inside the F1 region and a stationary peripheral stalk (subunits F6, b, d, and OSCP). Interacts with DNAJC30; interaction is direct.

It is found in the mitochondrion inner membrane. It catalyses the reaction H(+)(in) = H(+)(out). Its function is as follows. Subunit a, of the mitochondrial membrane ATP synthase complex (F(1)F(0) ATP synthase or Complex V) that produces ATP from ADP in the presence of a proton gradient across the membrane which is generated by electron transport complexes of the respiratory chain. ATP synthase complex consist of a soluble F(1) head domain - the catalytic core - and a membrane F(1) domain - the membrane proton channel. These two domains are linked by a central stalk rotating inside the F(1) region and a stationary peripheral stalk. During catalysis, ATP synthesis in the catalytic domain of F(1) is coupled via a rotary mechanism of the central stalk subunits to proton translocation. With the subunit c (ATP5MC1), forms the proton-conducting channel in the F(0) domain, that contains two crucial half-channels (inlet and outlet) that facilitate proton movement from the mitochondrial intermembrane space (IMS) into the matrix. Protons are taken up via the inlet half-channel and released through the outlet half-channel, following a Grotthuss mechanism. This is ATP synthase F(0) complex subunit a from Salmo salar (Atlantic salmon).